Reading from the N-terminus, the 313-residue chain is Ribosomal RNA small subunit methyltransferase H (313 aa).

Residues 35-37 (GGH), D55, F79, D101, and Q108 contribute to the S-adenosyl-L-methionine site.

The protein belongs to the methyltransferase superfamily. RsmH family.

It is found in the cytoplasm. The catalysed reaction is cytidine(1402) in 16S rRNA + S-adenosyl-L-methionine = N(4)-methylcytidine(1402) in 16S rRNA + S-adenosyl-L-homocysteine + H(+). In terms of biological role, specifically methylates the N4 position of cytidine in position 1402 (C1402) of 16S rRNA. The chain is Ribosomal RNA small subunit methyltransferase H from Erwinia tasmaniensis (strain DSM 17950 / CFBP 7177 / CIP 109463 / NCPPB 4357 / Et1/99).